The primary structure comprises 155 residues: Ribosomal RNA large subunit methyltransferase H (155 aa).

S-adenosyl-L-methionine contacts are provided by residues L73, G104, and 123 to 128; that span reads LSPLTL.

It belongs to the RNA methyltransferase RlmH family. Homodimer.

The protein resides in the cytoplasm. It catalyses the reaction pseudouridine(1915) in 23S rRNA + S-adenosyl-L-methionine = N(3)-methylpseudouridine(1915) in 23S rRNA + S-adenosyl-L-homocysteine + H(+). Functionally, specifically methylates the pseudouridine at position 1915 (m3Psi1915) in 23S rRNA. The polypeptide is Ribosomal RNA large subunit methyltransferase H (Pseudomonas putida (strain W619)).